Reading from the N-terminus, the 313-residue chain is Beta-lactamase BRO-1 (313 aa).

Residues 1 to 25 form the signal peptide; it reads MQRRHFLQKTLLALPIIFSGNLLTG. Residue C26 is the site of N-palmitoyl cysteine attachment. Residue C26 is the site of S-diacylglycerol cysteine attachment. S90 serves as the catalytic Acyl-ester intermediate. Position 255-257 (255-257) interacts with substrate; the sequence is KTG.

The protein belongs to the class-A beta-lactamase family.

It is found in the cell membrane. It carries out the reaction a beta-lactam + H2O = a substituted beta-amino acid. The polypeptide is Beta-lactamase BRO-1 (bla) (Moraxella catarrhalis (Branhamella catarrhalis)).